We begin with the raw amino-acid sequence, 142 residues long: Small heat shock protein IbpB (142 aa).

Residues 26 to 137 enclose the sHSP domain; it reads AGESQSFPPY…APQRIAISER (112 aa).

This sequence belongs to the small heat shock protein (HSP20) family. In terms of assembly, homodimer. Forms homomultimers of about 100-150 subunits at optimal growth temperatures. Conformation changes to oligomers at high temperatures or high ionic concentrations. The decrease in size of the multimers is accompanied by an increase in chaperone activity.

The protein localises to the cytoplasm. In terms of biological role, associates with aggregated proteins, together with IbpA, to stabilize and protect them from irreversible denaturation and extensive proteolysis during heat shock and oxidative stress. Aggregated proteins bound to the IbpAB complex are more efficiently refolded and reactivated by the ATP-dependent chaperone systems ClpB and DnaK/DnaJ/GrpE. Its activity is ATP-independent. The polypeptide is Small heat shock protein IbpB (Klebsiella pneumoniae subsp. pneumoniae (strain ATCC 700721 / MGH 78578)).